Reading from the N-terminus, the 207-residue chain is Ras-related protein Rab-7a (207 aa).

Position 2 is an N-acetylthreonine (Thr-2). Residues Ser-17, Gly-18, Val-19, Gly-20, Lys-21, Thr-22, Ser-23, Ser-34, Asn-35, Tyr-37, and Thr-40 each contribute to the GTP site. Position 22 (Thr-22) interacts with Mg(2+). The Switch 1 motif lies at 28–41 (YVNKKFSNQYKATI). Residues Thr-40 and Asp-63 each coordinate Mg(2+). Gly-66 provides a ligand contact to GTP. Residues 67-82 (QERFQSLGVAFYRGAD) carry the Switch 2 motif. Phosphoserine is present on Ser-72. Residues Asn-125, Lys-126, Asp-128, Ala-156, and Lys-157 each contribute to the GTP site. Residues Lys-191 and Lys-194 each participate in a glycyl lysine isopeptide (Lys-Gly) (interchain with G-Cter in ubiquitin) cross-link. 2 S-geranylgeranyl cysteine lipidation sites follow: Cys-205 and Cys-207. The residue at position 207 (Cys-207) is a Cysteine methyl ester.

It belongs to the small GTPase superfamily. Rab family. In terms of assembly, interacts with NTRK1/TRKA, RILP, PSMA7, RNF115 and FYCO1. Interacts with the PIK3C3/VPS34-PIK3R4 complex. The GTP-bound form interacts with OSBPL1A and RAC1. Interacts with CLN3. Interacts with CHM, the substrate-binding subunit of the Rab geranylgeranyltransferase complex. Interacts with C9orf72. Does not interact with HPS4 and the BLOC-3 complex (heterodimer of HPS1 and HPS4). Interacts with CLN5. Interacts with PLEKHM1 (via N- and C-terminus). Interacts with PRPH; the interaction is direct. Interacts with VPS13A. The GDP-bound form interacts with RIMOC1. Interacts with the MON1A-CCZ1B complex and this interaction is enhanced in the presence of RIMOC1. Interacts with VPS39 and VPS41. Forms a ternary complex with LAMP2 and RUFY4; the interaction with LAMP2 is mediated by RUFY4 (via RUN and coiled coil domains). Mg(2+) is required as a cofactor. Deubiquitination at Lys-191 and Lys-194 by USP32. Post-translationally, phosphorylated at Ser-72 by LRRK1; phosphorylation is dependent on protein kinase C (PKC) activation of LRRK1. In terms of processing, prenylated. Prenylation is required for association with cellular membranes. In terms of tissue distribution, widely expressed. High expression in liver, heart and kidney. Found in sensory and motor neurons.

It localises to the cytoplasmic vesicle. The protein resides in the phagosome membrane. It is found in the late endosome membrane. The protein localises to the lysosome membrane. Its subcellular location is the melanosome membrane. It localises to the autophagosome membrane. The protein resides in the lipid droplet. It is found in the endosome membrane. The protein localises to the mitochondrion membrane. The catalysed reaction is GTP + H2O = GDP + phosphate + H(+). With respect to regulation, regulated by guanine nucleotide exchange factors (GEFs) which promote the exchange of bound GDP for free GTP. Regulated by GTPase activating proteins (GAPs) which increase the GTP hydrolysis activity. Inhibited by GDP dissociation inhibitors (GDIs). The small GTPases Rab are key regulators of intracellular membrane trafficking, from the formation of transport vesicles to their fusion with membranes. Rabs cycle between an inactive GDP-bound form and an active GTP-bound form that is able to recruit to membranes different sets of downstream effectors directly responsible for vesicle formation, movement, tethering and fusion. In its active state, RAB7A binds to a variety of effector proteins playing a key role in the regulation of endo-lysosomal trafficking. Governs early-to-late endosomal maturation, microtubule minus-end as well as plus-end directed endosomal migration and positioning, and endosome-lysosome transport through different protein-protein interaction cascades. Also plays a central role in growth-factor-mediated cell signaling, nutrient-transporter-mediated nutrient uptake, neurotrophin transport in the axons of neurons and lipid metabolism. Also involved in regulation of some specialized endosomal membrane trafficking, such as maturation of melanosomes, pathogen-induced phagosomes (or vacuoles) and autophagosomes. Plays a role in the maturation and acidification of phagosomes that engulf pathogens, such as S.aureus and Mycobacteria. Plays a role in the fusion of phagosomes with lysosomes. In concert with RAC1, plays a role in regulating the formation of RBs (ruffled borders) in osteoclasts. Controls the endosomal trafficking and neurite outgrowth signaling of NTRK1/TRKA. Regulates the endocytic trafficking of the EGF-EGFR complex by regulating its lysosomal degradation. Involved in the ADRB2-stimulated lipolysis through lipophagy, a cytosolic lipase-independent autophagic pathway. Required for the exosomal release of SDCBP, CD63 and syndecan. Required for vesicular trafficking and cell surface expression of ACE2. May play a role in PRPH neuronal intermediate filament assembly. The polypeptide is Ras-related protein Rab-7a (Mus musculus (Mouse)).